The primary structure comprises 397 residues: Acetyl-CoA acetyltransferase, cytosolic (397 aa).

Met1 bears the N-acetylmethionine mark. The Acyl-thioester intermediate role is filled by Cys92. Position 200 is an N6-acetyllysine (Lys200). 2 residues coordinate CoA: Arg223 and Ser226. Residues Lys233 and Lys235 each carry the N6-acetyllysine modification. Residue Ser252 coordinates CoA. Catalysis depends on Cys383, which acts as the Proton donor/acceptor.

The protein belongs to the thiolase-like superfamily. Thiolase family. In terms of assembly, homotetramer.

The protein localises to the cytoplasm. The protein resides in the cytosol. The enzyme catalyses 2 acetyl-CoA = acetoacetyl-CoA + CoA. Its pathway is lipid metabolism; fatty acid metabolism. In terms of biological role, involved in the biosynthetic pathway of cholesterol. This chain is Acetyl-CoA acetyltransferase, cytosolic (ACAT2), found in Homo sapiens (Human).